Here is a 215-residue protein sequence, read N- to C-terminus: Ras-related protein SEC4 (215 aa).

27–34 (GDSGVGKS) provides a ligand contact to GTP. Residues 49–57 (FITTIGIDF) carry the Effector region motif. GTP-binding positions include 75-79 (DTAGQ) and 133-136 (NKSD). Ser201 and Ser204 each carry phosphoserine. S-geranylgeranyl cysteine attachment occurs at residues Cys214 and Cys215.

It belongs to the small GTPase superfamily. Rab family. As to quaternary structure, interacts with the guanyl-nucleotide exchange factor SEC2. Interacts with SRO7, YIF1, YIP3, YIP4 and YIP5.

Its subcellular location is the cytoplasmic vesicle. It localises to the secretory vesicle membrane. It is found in the cell membrane. The protein resides in the cytoplasm. In terms of biological role, involved in exocytosis. Maybe by regulating the binding and fusion of secretory vesicles with the cell surface. The GTP-bound form of SEC4 may interact with an effector, thereby stimulating its activity and leading to exocytotic fusion. SEC4 may be an upstream activator of the 19.5S SEC8/SEC15 particle. SEC4 probably interacts directly with SEC8; it could serve as the attachment site for the SEC8/SEC15 particle. The sequence is that of Ras-related protein SEC4 (SEC4) from Saccharomyces cerevisiae (strain ATCC 204508 / S288c) (Baker's yeast).